Reading from the N-terminus, the 28-residue chain is 3,4-dihydroxybenzoate decarboxylase (28 aa).

Homopentamer.

It carries out the reaction 3,4-dihydroxybenzoate + H(+) = catechol + CO2. Its activity is regulated as follows. Inhibited by oxygen. Completely inhibited by HgCl(2). Partially inhibited by ZnSO(4), 2,3,4-trihydroxybeonzoate and 3,4,5-trihydroxybeonzoate. Unaffected by KCl, MnCl(2) or EDTA. Not stimulated by thiamine phosphate, pyridoxal 5'-phosphate or biotin. Not inhibited by hydroxylamine, NaBH(4) or avidin. Its function is as follows. Reversibly catalyzes the decarboxylation of 3,4-dihydroxybenzoate to catechol. Inactive toward 4-hydroxybenzoate and other benzoate derivatives. The chain is 3,4-dihydroxybenzoate decarboxylase from Sedimentibacter hydroxybenzoicus (Clostridium hydroxybenzoicum).